Here is a 1333-residue protein sequence, read N- to C-terminus: Aldehyde oxidase 1 (1333 aa).

Positions 4-91 (PQLLFYVNGQ…GTAVTTVEGI (88 aa)) constitute a 2Fe-2S ferredoxin-type domain. [2Fe-2S] cluster-binding residues include C43, C48, C51, and C73. Q112 contributes to the Mo-molybdopterin binding site. The [2Fe-2S] cluster site is built by C113, C116, C148, and C150. C150 lines the Mo-molybdopterin pocket. An FAD-binding PCMH-type domain is found at 235 to 420 (FYSNRMTWIS…VSVNIPCSRK (186 aa)). FAD is bound by residues 263–270 (IVMGYTSV), A344, S353, H357, D366, and L410. Mo-molybdopterin is bound by residues 801-802 (AF) and M1042. A Phosphoserine modification is found at S1063. Mo-molybdopterin-binding positions include 1083-1086 (GSVV), Q1198, and L1263. The active-site Proton acceptor; for azaheterocycle hydroxylase activity is E1265.

It belongs to the xanthine dehydrogenase family. In terms of assembly, homodimer. [2Fe-2S] cluster is required as a cofactor. FAD serves as cofactor. It depends on Mo-molybdopterin as a cofactor. In terms of processing, the N-terminus is blocked. Expression in liver (at protein level). Also detected in heart, lung, spleen and kidney.

It is found in the cytoplasm. It catalyses the reaction an aldehyde + O2 + H2O = a carboxylate + H2O2 + H(+). The catalysed reaction is retinal + O2 + H2O = retinoate + H2O2 + H(+). With respect to regulation, inhibited by menadione and isovanillin. Not inhibited by allopurinol, a xanthine dehydrogenase potent inhibitor. Inhibited by the flavonoids quercetin, myricetin and genistein. Nitric oxide generation is inhibited by raloxifene and competitively inhibited by an increase in oxygen levels. Oxidase with broad substrate specificity, oxidizing aromatic azaheterocycles, such as N1-methylnicotinamide, N-methylphthalazinium and phthalazine, as well as aldehydes, such as benzaldehyde, retinal, pyridoxal, and vanillin. Plays a role in the metabolism of xenobiotics and drugs containing aromatic azaheterocyclic substituents. Participates in the bioactivation of prodrugs such as famciclovir, catalyzing the oxidation step from 6-deoxypenciclovir to penciclovir, which is a potent antiviral agent. Is probably involved in the regulation of reactive oxygen species homeostasis. Is a prominent source of superoxide generation via the one-electron reduction of molecular oxygen. Also catalyzes nitric oxide (NO) production; under anaerobic conditions, reduces nitrite to NO with NADH or aldehyde as electron donor, but under aerobic conditions, NADH is the preferred substrate. These reactions may be catalyzed by several isozymes. May play a role in adipogenesis. The protein is Aldehyde oxidase 1 of Rattus norvegicus (Rat).